The sequence spans 334 residues: RNA ligase 2 (334 aa).

Positions 1-234 are adenylyltransferase; the sequence is MFKKYSSLEN…KCKNSKFSEK (234 aa). AMP is bound by residues Glu34, Lys35, Ile36, Asn40, Arg55, and Glu99. The N6-AMP-lysine intermediate role is filled by Lys35. Mg(2+) contacts are provided by Ile162, Leu164, Asn166, Glu204, and Tyr206. Lys225 and Lys227 together coordinate AMP.

It belongs to the RNA ligase 2 family. It depends on Mg(2+) as a cofactor. The cofactor is Mn(2+).

It carries out the reaction ATP + (ribonucleotide)n-3'-hydroxyl + 5'-phospho-(ribonucleotide)m = (ribonucleotide)n+m + AMP + diphosphate.. Its function is as follows. Repairs 3'-OH/5'-PO4 nicks in duplex RNA or RNA:DNA hybrid in which the broken 3'-OH strand is RNA. The nick ligation reaction entails three nucleotidyl transfer steps. In the first step, the RNA ligase reacts with ATP in the absence of nucleic acid to form a covalent ligase-AMP intermediate and release pyrophosphate. In step 2, the ligase-AMP binds to the nicked duplex nucleic acid and transfers the adenylate to the 5'-PO4 terminus to form an adenylylated nicked intermediate. In step 3, the RNA ligase directs the attack of the nick 3'-OH on the 5'-phosphoanhydride linkage, resulting in a repaired 3' - 5' phosphodiester and release of AMP. In Enterobacteria phage T4 (Bacteriophage T4), this protein is RNA ligase 2 (Y10A).